A 397-amino-acid polypeptide reads, in one-letter code: Metallophosphoesterase 1 (397 aa).

Residues 27–47 (IAVVFAVLLFCEFLIYYLAIF) form a helical membrane-spanning segment. 6 residues coordinate a divalent metal cation: aspartate 77, aspartate 119, asparagine 157, histidine 250, histidine 304, and histidine 306. The helical transmembrane segment at 357 to 377 (VVLIIYCGMVGFLVVLTLTHF) threads the bilayer. A Di-lysine motif motif is present at residues 393–397 (KRKTR).

The protein belongs to the metallophosphoesterase superfamily. MPPE1 family. Interacts with GPI-anchor proteins (via the GPI portion). Interacts with TMED10. The cofactor is Mn(2+).

It is found in the endoplasmic reticulum-Golgi intermediate compartment membrane. Functionally, metallophosphoesterase that catalyzes the removal of a side-chain ethanolamine-phosphate (EtNP) from the second mannose of the GPI-anchor protein intermediate. Participates in the glycan remodeling steps of GPI-anchor maturation to allow an efficient transport of GPI-anchor proteins from the endoplasmic reticulum to the Golgi. The sequence is that of Metallophosphoesterase 1 from Pongo abelii (Sumatran orangutan).